A 225-amino-acid chain; its full sequence is PKHD-type hydroxylase HEAR3399 (225 aa).

Residues 77–177 (RYMPPLFNRY…RVCSFFWLQS (101 aa)) enclose the Fe2OG dioxygenase domain. Positions 95, 97, and 158 each coordinate Fe cation. Arginine 168 is a 2-oxoglutarate binding site.

Fe(2+) is required as a cofactor. L-ascorbate serves as cofactor.

This Herminiimonas arsenicoxydans protein is PKHD-type hydroxylase HEAR3399.